We begin with the raw amino-acid sequence, 311 residues long: D-alanine--D-alanine ligase (311 aa).

An ATP-grasp domain is found at 106-301; the sequence is KLLWRGAELP…FDELCWRILL (196 aa). Position 132 to 187 (132 to 187) interacts with ATP; that stretch reads IGSVGLPLMIKPAHEGSSIGMAKVERPEELEAARAEAARYDDLVLAERWIEGGEYT. D255, E268, and N270 together coordinate Mg(2+).

This sequence belongs to the D-alanine--D-alanine ligase family. Requires Mg(2+) as cofactor. The cofactor is Mn(2+).

Its subcellular location is the cytoplasm. The enzyme catalyses 2 D-alanine + ATP = D-alanyl-D-alanine + ADP + phosphate + H(+). It functions in the pathway cell wall biogenesis; peptidoglycan biosynthesis. Its function is as follows. Cell wall formation. The polypeptide is D-alanine--D-alanine ligase (Alkalilimnicola ehrlichii (strain ATCC BAA-1101 / DSM 17681 / MLHE-1)).